Here is a 281-residue protein sequence, read N- to C-terminus: Nucleotide-binding protein Tpet_1006 (281 aa).

9–16 (GLSGAGKT) provides a ligand contact to ATP. 58-61 (DVRS) contacts GTP.

It belongs to the RapZ-like family.

Displays ATPase and GTPase activities. This is Nucleotide-binding protein Tpet_1006 from Thermotoga petrophila (strain ATCC BAA-488 / DSM 13995 / JCM 10881 / RKU-1).